Here is a 433-residue protein sequence, read N- to C-terminus: Protoheme IX farnesyltransferase 2 (433 aa).

The segment at 1-164 (MQRFTGLVTA…LTKPRLMWLL (164 aa)) is unknown. 13 helical membrane passes run 4–24 (FTGL…LGVA), 35–55 (AVAH…AAAL), 67–87 (WGVT…MAVL), 95–115 (LHLF…TWHL), 160–180 (LMWL…VTGA), 184–204 (GVTI…AGTF), 236–256 (AFGV…VNPL), 257–277 (AAAL…VVLK), 282–304 (WNTV…AVAG), 308–330 (LPAL…NLAI), 357–377 (ILYW…VAGF), 378–398 (GPVY…TVVV), and 413–433 (HASN…TMVI). Positions 165–430 (CLLALSGMAL…ALLVAILVET (266 aa)) are protoheme IX prenyltransferase.

The protein in the C-terminal section; belongs to the UbiA prenyltransferase family. Protoheme IX farnesyltransferase subfamily.

The protein resides in the cell membrane. The enzyme catalyses heme b + (2E,6E)-farnesyl diphosphate + H2O = Fe(II)-heme o + diphosphate. Its pathway is porphyrin-containing compound metabolism; heme O biosynthesis; heme O from protoheme: step 1/1. Its function is as follows. Converts heme B (protoheme IX) to heme O by substitution of the vinyl group on carbon 2 of heme B porphyrin ring with a hydroxyethyl farnesyl side group. This chain is Protoheme IX farnesyltransferase 2 (ctaB2), found in Natronomonas pharaonis (strain ATCC 35678 / DSM 2160 / CIP 103997 / JCM 8858 / NBRC 14720 / NCIMB 2260 / Gabara) (Halobacterium pharaonis).